Reading from the N-terminus, the 283-residue chain is Phosphatidylserine decarboxylase proenzyme (283 aa).

Catalysis depends on charge relay system; for autoendoproteolytic cleavage activity residues Asp-96, His-152, and Ser-250. The active-site Schiff-base intermediate with substrate; via pyruvic acid; for decarboxylase activity is Ser-250. At Ser-250 the chain carries Pyruvic acid (Ser); by autocatalysis.

Belongs to the phosphatidylserine decarboxylase family. PSD-B subfamily. Prokaryotic type I sub-subfamily. As to quaternary structure, heterodimer of a large membrane-associated beta subunit and a small pyruvoyl-containing alpha subunit. It depends on pyruvate as a cofactor. Is synthesized initially as an inactive proenzyme. Formation of the active enzyme involves a self-maturation process in which the active site pyruvoyl group is generated from an internal serine residue via an autocatalytic post-translational modification. Two non-identical subunits are generated from the proenzyme in this reaction, and the pyruvate is formed at the N-terminus of the alpha chain, which is derived from the carboxyl end of the proenzyme. The autoendoproteolytic cleavage occurs by a canonical serine protease mechanism, in which the side chain hydroxyl group of the serine supplies its oxygen atom to form the C-terminus of the beta chain, while the remainder of the serine residue undergoes an oxidative deamination to produce ammonia and the pyruvoyl prosthetic group on the alpha chain. During this reaction, the Ser that is part of the protease active site of the proenzyme becomes the pyruvoyl prosthetic group, which constitutes an essential element of the active site of the mature decarboxylase.

Its subcellular location is the cell membrane. The enzyme catalyses a 1,2-diacyl-sn-glycero-3-phospho-L-serine + H(+) = a 1,2-diacyl-sn-glycero-3-phosphoethanolamine + CO2. It participates in phospholipid metabolism; phosphatidylethanolamine biosynthesis; phosphatidylethanolamine from CDP-diacylglycerol: step 2/2. In terms of biological role, catalyzes the formation of phosphatidylethanolamine (PtdEtn) from phosphatidylserine (PtdSer). This chain is Phosphatidylserine decarboxylase proenzyme, found in Acinetobacter baumannii (strain AB0057).